The sequence spans 535 residues: Protoheme IX farnesyltransferase (535 aa).

The segment at 1–263 (MRRENARVVA…DYVSLTKPGV (263 aa)) is unknown. Transmembrane regions (helical) follow at residues 18–38 (WMVI…SIIP), 40–60 (MTGA…LAMY), 83–103 (YLTL…AGAL), 127–147 (WPAL…AALA), 163–183 (VACA…QVLL), 197–217 (LTHL…VTLA), 262–282 (GVIS…PAGI), 285–305 (WSLV…SHSI), 334–354 (HALA…AIFV), 357–377 (LTAL…TIWL), 385–405 (IVIG…AVTG), 412–432 (LLLW…LALI), 474–494 (LLGM…GLFL), and 509–529 (AWAL…AMVV). The protoheme IX prenyltransferase stretch occupies residues 264–535 (ISLLILTTIT…AMVVDRAVFA (272 aa)).

The protein in the C-terminal section; belongs to the UbiA prenyltransferase family. Protoheme IX farnesyltransferase subfamily.

The protein resides in the cell membrane. It carries out the reaction heme b + (2E,6E)-farnesyl diphosphate + H2O = Fe(II)-heme o + diphosphate. Its pathway is porphyrin-containing compound metabolism; heme O biosynthesis; heme O from protoheme: step 1/1. In terms of biological role, converts heme B (protoheme IX) to heme O by substitution of the vinyl group on carbon 2 of heme B porphyrin ring with a hydroxyethyl farnesyl side group. The sequence is that of Protoheme IX farnesyltransferase (ctaB) from Roseiflexus castenholzii (strain DSM 13941 / HLO8).